A 433-amino-acid chain; its full sequence is Delta-aminolevulinic acid dehydratase, chloroplastic (433 aa).

Residues 1–56 (MASTFNIPCNAGTIKNFNNSQRNLGFSSNLGINFAKTRFSNCGDSGRIPSQLVVRA) constitute a chloroplast transit peptide. The disordered stretch occupies residues 83-115 (NAPSAPPVPPTPKAPSGTPSVSPLSLGRRPRRN). Residues 86 to 95 (SAPPVPPTPK) are compositionally biased toward pro residues. K301 acts as the Schiff-base intermediate with substrate in catalysis. R311 and K323 together coordinate 5-aminolevulinate. E339 contacts Mg(2+). Residue K354 is the Schiff-base intermediate with substrate of the active site. 5-aminolevulinate is bound by residues S380 and Y419.

This sequence belongs to the ALAD family. Homooctamer. It depends on Mg(2+) as a cofactor.

The protein resides in the plastid. Its subcellular location is the chloroplast. It carries out the reaction 2 5-aminolevulinate = porphobilinogen + 2 H2O + H(+). Its pathway is porphyrin-containing compound metabolism; protoporphyrin-IX biosynthesis; coproporphyrinogen-III from 5-aminolevulinate: step 1/4. Its function is as follows. Catalyzes an early step in the biosynthesis of tetrapyrroles. Binds two molecules of 5-aminolevulinate per subunit, each at a distinct site, and catalyzes their condensation to form porphobilinogen. The chain is Delta-aminolevulinic acid dehydratase, chloroplastic (HEMB) from Spinacia oleracea (Spinach).